Here is a 143-residue protein sequence, read N- to C-terminus: Large-conductance mechanosensitive channel (143 aa).

2 consecutive transmembrane segments (helical) span residues 10-30 (FAVK…GAFS) and 89-109 (GSFI…FLMV).

Belongs to the MscL family. Homopentamer.

The protein resides in the cell inner membrane. In terms of biological role, channel that opens in response to stretch forces in the membrane lipid bilayer. May participate in the regulation of osmotic pressure changes within the cell. The sequence is that of Large-conductance mechanosensitive channel from Burkholderia multivorans (strain ATCC 17616 / 249).